A 130-amino-acid chain; its full sequence is Hypocretin neuropeptide precursor (130 aa).

Positions 1–32 (MNPPSTKVPWAAVTLLLLLLLPPALLSPGAAA) are cleaved as a signal peptide. Q33 carries the pyrrolidone carboxylic acid modification. Cystine bridges form between C38–C44 and C39–C46. L65 carries the leucine amide modification. The residue at position 96 (M96) is a Methionine amide. The propeptide at 97-130 (GRRAGAEPAPRPCPGRRCPVVAVPSAAPGGRSGV) is removed in mature form.

Belongs to the orexin family. Specific enzymatic cleavages at paired basic residues yield the different active peptides.

Its subcellular location is the rough endoplasmic reticulum. The protein localises to the cytoplasmic vesicle. It localises to the synapse. Functionally, neuropeptides that play a significant role in the regulation of food intake and sleep-wakefulness, possibly by coordinating the complex behavioral and physiologic responses of these complementary homeostatic functions. A broader role in the homeostatic regulation of energy metabolism, autonomic function, hormonal balance and the regulation of body fluids, is also suggested. Binds to orexin receptors HCRTR1/OX1R and HCRTR2/OX2R with a high affinity. Stimulates food intake. Modulates pituitary luteinizing hormone secretion in an ovarian steroid-dependent manner. In terms of biological role, binds to orexin receptor HCRTR2/OX2R only. Stimulates food intake. Modulates pituitary luteinizing hormone secretion in an ovarian steroid-dependent manner. The polypeptide is Hypocretin neuropeptide precursor (HCRT) (Canis lupus familiaris (Dog)).